Here is a 947-residue protein sequence, read N- to C-terminus: Bifunctional glutamine synthetase adenylyltransferase/adenylyl-removing enzyme (947 aa).

The adenylyl removase stretch occupies residues 1-440; the sequence is MTPLSSPLSQ…VFNELIGDDE (440 aa). The adenylyl transferase stretch occupies residues 450–947; sequence SEPWREVWQD…ASWRKWLVAV (498 aa).

The protein belongs to the GlnE family. Mg(2+) serves as cofactor.

It carries out the reaction [glutamine synthetase]-O(4)-(5'-adenylyl)-L-tyrosine + phosphate = [glutamine synthetase]-L-tyrosine + ADP. It catalyses the reaction [glutamine synthetase]-L-tyrosine + ATP = [glutamine synthetase]-O(4)-(5'-adenylyl)-L-tyrosine + diphosphate. Functionally, involved in the regulation of glutamine synthetase GlnA, a key enzyme in the process to assimilate ammonia. When cellular nitrogen levels are high, the C-terminal adenylyl transferase (AT) inactivates GlnA by covalent transfer of an adenylyl group from ATP to specific tyrosine residue of GlnA, thus reducing its activity. Conversely, when nitrogen levels are low, the N-terminal adenylyl removase (AR) activates GlnA by removing the adenylyl group by phosphorolysis, increasing its activity. The regulatory region of GlnE binds the signal transduction protein PII (GlnB) which indicates the nitrogen status of the cell. The chain is Bifunctional glutamine synthetase adenylyltransferase/adenylyl-removing enzyme from Salmonella enteritidis PT4 (strain P125109).